The following is a 376-amino-acid chain: Chaperone protein DnaJ (376 aa).

The 66-residue stretch at 5 to 70 folds into the J domain; sequence DYYETLGVQK…EKRAAYDQYG (66 aa). The CR-type zinc-finger motif lies at 133 to 211; it reads GTTKDIKINT…CHGDGRVHKK (79 aa). The Zn(2+) site is built by C146, C149, C163, C166, C185, C188, C199, and C202. CXXCXGXG motif repeat units lie at residues 146–153, 163–170, 185–192, and 199–206; these read CDHCDGSG, CPTCHGHG, CPTCQGSG, and CKHCHGDG.

The protein belongs to the DnaJ family. In terms of assembly, homodimer. It depends on Zn(2+) as a cofactor.

Its subcellular location is the cytoplasm. In terms of biological role, participates actively in the response to hyperosmotic and heat shock by preventing the aggregation of stress-denatured proteins and by disaggregating proteins, also in an autonomous, DnaK-independent fashion. Unfolded proteins bind initially to DnaJ; upon interaction with the DnaJ-bound protein, DnaK hydrolyzes its bound ATP, resulting in the formation of a stable complex. GrpE releases ADP from DnaK; ATP binding to DnaK triggers the release of the substrate protein, thus completing the reaction cycle. Several rounds of ATP-dependent interactions between DnaJ, DnaK and GrpE are required for fully efficient folding. Also involved, together with DnaK and GrpE, in the DNA replication of plasmids through activation of initiation proteins. The protein is Chaperone protein DnaJ of Mannheimia succiniciproducens (strain KCTC 0769BP / MBEL55E).